A 432-amino-acid polypeptide reads, in one-letter code: MAAPMEVAVCTDSAAPMWSCIVWELHSGANLLTYRGGQAGPRGLALLNGEYLLAAQLGKNYISAWELQRKDQLQQKIMCPGPVTCLTASPNGLYVLAGVAESIHLWEVSTGNLLVILSRHYQDVSCLQFTGDSSHFISGGKDCLVLVWSLCSVLQADPSRIPAPRHVWSHHALPITDLHCGFGGPLARVATSSLDQTVKLWEVSSGELLLSVLFDVSIMAVTMDLAEHHMFCGGSEGSIFQVDLFTWPGQRERSFHPEQDAGKVFKGHRNQVTCLSVSTDGSVLLSGSHDETVRLWDVQSKQCIRTVALKGPVTNAAILLAPVSMLSSDFRPSLPLPHFNKHLLGAEHGDEPRHGGLTLRLGLHQQGSEPSYLDRTEQLQAVLCSTMEKSVLGGQDQLRVRVTELEDEVRNLRKINRDLFDFSTRFITRPAK.

WD repeat units lie at residues 36–75 (GGQA…QLQQ), 78–116 (MCPG…LLVI), 119–158 (RHYQ…QADP), 170–211 (HHAL…LLLS), 213–257 (LFDV…SFHP), and 267–306 (GHRN…CIRT).

This sequence belongs to the WD repeat IPI3/WDR18 family. In terms of assembly, component of the 5FMC complex, at least composed of PELP1, LAS1L, TEX10, WDR18 and SENP3; the complex interacts with methylated CHTOP and ZNF148. Interacts with NOL9. Component of the PELP1 complex, composed of at least PELP1, TEX10 and WDR18. The complex interacts with pre-60S ribosome particles.

The protein resides in the nucleus. Its subcellular location is the nucleolus. It localises to the nucleoplasm. The protein localises to the cytoplasm. It is found in the dynein axonemal particle. Functions as a component of the Five Friends of Methylated CHTOP (5FMC) complex; the 5FMC complex is recruited to ZNF148 by methylated CHTOP, leading to desumoylation of ZNF148 and subsequent transactivation of ZNF148 target genes. Component of the PELP1 complex involved in the nucleolar steps of 28S rRNA maturation and the subsequent nucleoplasmic transit of the pre-60S ribosomal subunit. May play a role during development. The sequence is that of WD repeat-containing protein 18 (WDR18) from Homo sapiens (Human).